Here is a 309-residue protein sequence, read N- to C-terminus: Aspartate carbamoyltransferase catalytic subunit (309 aa).

The carbamoyl phosphate site is built by Arg48 and Thr49. Lys76 contacts L-aspartate. Residues Arg98, His128, and Gln131 each contribute to the carbamoyl phosphate site. Residues Arg161 and Arg211 each coordinate L-aspartate. Carbamoyl phosphate is bound by residues Ala250 and Pro251.

This sequence belongs to the aspartate/ornithine carbamoyltransferase superfamily. ATCase family. As to quaternary structure, heterododecamer (2C3:3R2) of six catalytic PyrB chains organized as two trimers (C3), and six regulatory PyrI chains organized as three dimers (R2).

The catalysed reaction is carbamoyl phosphate + L-aspartate = N-carbamoyl-L-aspartate + phosphate + H(+). It participates in pyrimidine metabolism; UMP biosynthesis via de novo pathway; (S)-dihydroorotate from bicarbonate: step 2/3. In terms of biological role, catalyzes the condensation of carbamoyl phosphate and aspartate to form carbamoyl aspartate and inorganic phosphate, the committed step in the de novo pyrimidine nucleotide biosynthesis pathway. This Oceanobacillus iheyensis (strain DSM 14371 / CIP 107618 / JCM 11309 / KCTC 3954 / HTE831) protein is Aspartate carbamoyltransferase catalytic subunit.